Reading from the N-terminus, the 1003-residue chain is NACHT, LRR and PYD domains-containing protein 9B (1003 aa).

The Pyrin domain occupies 1-91 (MAGSSGYGLL…SIMAQKKKRH (91 aa)). The NACHT domain maps to 143–465 (VTAIVAGTTG…QDKDICVPVI (323 aa)). ATP is bound at residue 149–156 (GTTGEGKT). LRR repeat units follow at residues 749–770 (KVKH…SLCE), 778–799 (VLQS…HLYE), 806–826 (HLSL…NLLC), 835–856 (TLKE…EISA), 863–883 (NLKT…RQLC), 892–913 (NLEC…DLAL), and 920–940 (TLNS…VVLC).

Sensor component of NLRP9 inflammasomes. Inflammasomes are supramolecular complexes that assemble in the cytosol in response to pathogens, such as rotavirus, but not encephalomyocarditis virus (EMCV), and play critical roles in innate immunity and inflammation. The core of NLRP9 inflammasomes consists of a signal sensor component (NLRP9), an adapter (ASC/PYCARD), which recruits an effector pro-inflammatory caspase (CASP1). Within the complex, NLRP9 and PYCARD interact via their respective DAPIN/pyrin domains. This interaction initiates speck formation (nucleation) which greatly enhances further addition of soluble PYCARD molecules to the speck in a prion-like polymerization process. Clustered PYCARD nucleates the formation of CASP1 filaments through the interaction of their respective CARD domains, acting as a platform for CASP1 polymerization. CASP1 filament formation increases local enzyme concentration, resulting in trans-autocleavage and activation. Active CASP1 then processes IL1B and IL18 precursors, leading to the release of mature cytokines in the extracellular milieu and inflammatory response. Interacts with DHX9 upon rotavirus infection; this interaction may trigger inflammasome activation and inflammatory response. As to expression, predominantly expressed in the intestine, including proximal and distal colon, cecum, ileum, jejunum and duodenum (at protein level). In the ileum, expressed in epithelial cells. Also expressed in oocytes at all follicular stages and in preimplantation embryos (at protein level). Although expression decreases in preimplantation embryos, it is still detectable in blastocyts.

The protein localises to the cytoplasm. Its subcellular location is the inflammasome. Functionally, as the sensor component of the NLRP9 inflammasome, plays a crucial role in innate immunity and inflammation. In response to pathogens, including rotavirus, initiates the formation of the inflammasome polymeric complex, made of NLRP9, PYCARD and CASP1. Recruitment of proCASP1 to the inflammasome promotes its activation and CASP1-catalyzed IL1B and IL18 maturation and release in the extracellular milieu. The active cytokines stimulate inflammatory responses. Inflammasomes can also induce pyroptosis, an inflammatory form of programmed cell death. NLRP9 inflammasome activation may be initiated by DHX9 interaction with viral double-stranded RNA (dsRNA), preferentially to short dsRNA segments. This Mus musculus (Mouse) protein is NACHT, LRR and PYD domains-containing protein 9B (Nlrp9b).